Here is a 294-residue protein sequence, read N- to C-terminus: UDP-N-acetylenolpyruvoylglucosamine reductase (294 aa).

The 164-residue stretch at 26–189 (VGGQADVLFK…IEAEFKGVSS (164 aa)) folds into the FAD-binding PCMH-type domain. Arg169 is a catalytic residue. Cys218 acts as the Proton donor in catalysis. Glu288 is an active-site residue.

The protein belongs to the MurB family. Requires FAD as cofactor.

The protein resides in the cytoplasm. The enzyme catalyses UDP-N-acetyl-alpha-D-muramate + NADP(+) = UDP-N-acetyl-3-O-(1-carboxyvinyl)-alpha-D-glucosamine + NADPH + H(+). It functions in the pathway cell wall biogenesis; peptidoglycan biosynthesis. Cell wall formation. This Wolbachia pipientis subsp. Culex pipiens (strain wPip) protein is UDP-N-acetylenolpyruvoylglucosamine reductase.